We begin with the raw amino-acid sequence, 241 residues long: ATP synthase subunit a (241 aa).

Helical transmembrane passes span 30–50 (GQVFLTSWILLGALLVFISLG), 91–111 (FIGTLFLFVFVSNWGGALIPW), 128–148 (INTTIALALLVSLSYFYAGLS), 193–213 (LVVGVLVFLVPLILPIPVMFL), and 214–234 (GLFTSAIQALIFATLAAYYIG).

Belongs to the ATPase A chain family. F-type ATPases have 2 components, CF(1) - the catalytic core - and CF(0) - the membrane proton channel. CF(1) has five subunits: alpha(3), beta(3), gamma(1), delta(1), epsilon(1). CF(0) has four main subunits: a, b, b' and c.

The protein resides in the cellular thylakoid membrane. Its function is as follows. Key component of the proton channel; it plays a direct role in the translocation of protons across the membrane. The sequence is that of ATP synthase subunit a from Prochlorococcus marinus (strain MIT 9312).